The sequence spans 157 residues: Ribosomal RNA large subunit methyltransferase H (157 aa).

S-adenosyl-L-methionine is bound by residues Gly-106 and 125 to 130 (LSEMTF).

It belongs to the RNA methyltransferase RlmH family. In terms of assembly, homodimer.

It is found in the cytoplasm. The catalysed reaction is pseudouridine(1915) in 23S rRNA + S-adenosyl-L-methionine = N(3)-methylpseudouridine(1915) in 23S rRNA + S-adenosyl-L-homocysteine + H(+). Its function is as follows. Specifically methylates the pseudouridine at position 1915 (m3Psi1915) in 23S rRNA. This is Ribosomal RNA large subunit methyltransferase H from Syntrophobacter fumaroxidans (strain DSM 10017 / MPOB).